A 498-amino-acid polypeptide reads, in one-letter code: Lysine--tRNA ligase (498 aa).

Residues glutamate 409 and glutamate 416 each contribute to the Mg(2+) site.

Belongs to the class-II aminoacyl-tRNA synthetase family. In terms of assembly, homodimer. Requires Mg(2+) as cofactor.

It is found in the cytoplasm. It carries out the reaction tRNA(Lys) + L-lysine + ATP = L-lysyl-tRNA(Lys) + AMP + diphosphate. The chain is Lysine--tRNA ligase from Coxiella burnetii (strain CbuK_Q154) (Coxiella burnetii (strain Q154)).